The following is a 965-amino-acid chain: MEVSGGDTCRPRHPQGLREGPEPKVAAAAAAFRGSANRCWNLSVDTSNRLSDVFNSMMLTGSAPFYDCYKSQNEDNVDLRQTCTPLSSSTEYASSIDSSLFYAPWSTYGDDIKQPPSSQISVKNRIQTERNDYGSETDLYGLVSNILEEQDKSQPYFAEGTCSSNLKSVWPMNTSRFVDHHDLLTEPKRPVDTSISQQAFYSGESVSAVEKQYLHNSSLTPQQKIDELYHGYTGLDLEEQWLYLSRSDHSNCYNSQANDTVKATFQEYPFVKNCFTPQTGLSDIMKESGIDTYAYGREKICTKGLETPLQHKRAEIFLSQFNRYNENADYCRYPEYAHPNKAKLNKCSNFSVQDGKKLANGTPETPTVEADAYTKLFQVKPANQKKMEETIPDQQNFAFPKTTPHLTEKQFAKEAAFTADFGLKSEYGLKPHTACPTNNDFANVSEKQQFAKPDPLNSEYFKSVNLFSNSATSSGGISLNRPTWMNVQTKNNLPIPYRNQGNLMKLNSHLSAASKGSNHSSDFPQLSSTNLTSNSNLFQKYCQENPSAFSSFDFSYNGAERIQSVNHMEGLTKTGEDNLFESVTEKKIKQPNGFCDSYSASQYGIIENVNKHNFQAKPQSGHYDPEDIPKHFDGLPQNTYQDLLESQGHFNSHRQGSGDNNINSRVNRTQASCFSNNYMMGDLRHNQGFQQLGSNGFPLRSTHPFGHSVVPLLDSYDLFSYDDLSHLYPYFNDMMYGDNSFSGFVPTFGFQRPIKTRSGPASELHIRLEECYEQWRALEKERKKTELALAKNYPGKKVSSTNNTPIPRLTSNPSRVDRLIVDELREQARVVTLLGKMERLRSSPLHANISTALDRHLESIHIVQSRRKDEIVNASNRQRQGVPRCQDDRDVFALATAIKEMCVATRKARTTLWCALQMTLPKTASTAGQADMEKAFQDLVNCEEKVHESINSSNPMNQRGETSKH.

Disordered stretches follow at residues 1-22 (MEVSGGDTCRPRHPQGLREGPE) and 946-965 (VHESINSSNPMNQRGETSKH). The span at 949 to 965 (SINSSNPMNQRGETSKH) shows a compositional bias: polar residues.

In terms of assembly, interacts with YTHDC2; binds transcripts that regulate the mitotic cell cycle inhibiting progression into metaphase, thereby allowing meiotic prophase to proceed normally. Interacts with RBM46. As to expression, expressed specifically in fetal ovary and postnatal and adult testes (at protein level). In adult testis expressed in spermatocytes, beginning in preleptotene and extending through most stages of meiotic prophase I, including leptotene, zygotene, and pachytene.

It localises to the cytoplasm. It is found in the nucleus. In terms of biological role, is required for meiosis completion in both male and female germ cells. Confers stability to numerous meiotic mRNAs in gonads allowing proper initiation and progression into meiosis prophase I. The function may involve YTHDC2 and is independent of induction by retinoic acid (RA). Maintains an extended meiotic prophase I by properly promoting the transition from a mitotic to a meiotic cell cycle program by binding transcripts through its interaction with YTHDC2 that regulate the mitotic cell cycle. This chain is Meiosis-specific coiled-coil domain-containing protein MEIOC, found in Mus musculus (Mouse).